Reading from the N-terminus, the 192-residue chain is Flagellar transcriptional regulator FlhC (192 aa).

Residues Cys-137, Cys-140, Cys-157, and Cys-160 each contribute to the Zn(2+) site.

This sequence belongs to the FlhC family. As to quaternary structure, heterohexamer composed of two FlhC and four FlhD subunits. Each FlhC binds a FlhD dimer, forming a heterotrimer, and a hexamer assembles by dimerization of two heterotrimers. The cofactor is Zn(2+).

The protein localises to the cytoplasm. In terms of biological role, functions in complex with FlhD as a master transcriptional regulator that regulates transcription of several flagellar and non-flagellar operons by binding to their promoter region. Activates expression of class 2 flagellar genes, including fliA, which is a flagellum-specific sigma factor that turns on the class 3 genes. Also regulates genes whose products function in a variety of physiological pathways. The chain is Flagellar transcriptional regulator FlhC from Escherichia coli O6:H1 (strain CFT073 / ATCC 700928 / UPEC).